Here is a 261-residue protein sequence, read N- to C-terminus: 4-hydroxy-tetrahydrodipicolinate reductase (261 aa).

Residues 11–16 (GFMGAM), 96–98 (GTT), and 122–125 (APNF) each bind NAD(+). Histidine 152 serves as the catalytic Proton donor/acceptor. Histidine 153 contacts (S)-2,3,4,5-tetrahydrodipicolinate. Lysine 156 (proton donor) is an active-site residue. Residue 162–163 (GT) participates in (S)-2,3,4,5-tetrahydrodipicolinate binding.

This sequence belongs to the DapB family.

The protein localises to the cytoplasm. It catalyses the reaction (S)-2,3,4,5-tetrahydrodipicolinate + NAD(+) + H2O = (2S,4S)-4-hydroxy-2,3,4,5-tetrahydrodipicolinate + NADH + H(+). The enzyme catalyses (S)-2,3,4,5-tetrahydrodipicolinate + NADP(+) + H2O = (2S,4S)-4-hydroxy-2,3,4,5-tetrahydrodipicolinate + NADPH + H(+). The protein operates within amino-acid biosynthesis; L-lysine biosynthesis via DAP pathway; (S)-tetrahydrodipicolinate from L-aspartate: step 4/4. Its function is as follows. Catalyzes the conversion of 4-hydroxy-tetrahydrodipicolinate (HTPA) to tetrahydrodipicolinate. The sequence is that of 4-hydroxy-tetrahydrodipicolinate reductase from Lactobacillus helveticus (strain DPC 4571).